The primary structure comprises 175 residues: Alkyl hydroperoxide reductase AhpD (175 aa).

The Proton donor role is filled by Cys131. A disulfide bond links Cys131 and Cys134. Cys134 serves as the catalytic Cysteine sulfenic acid (-SOH) intermediate.

Belongs to the AhpD family.

The enzyme catalyses N(6)-[(R)-dihydrolipoyl]-L-lysyl-[lipoyl-carrier protein] + a hydroperoxide = N(6)-[(R)-lipoyl]-L-lysyl-[lipoyl-carrier protein] + an alcohol + H2O. Its function is as follows. Antioxidant protein with alkyl hydroperoxidase activity. Required for the reduction of the AhpC active site cysteine residues and for the regeneration of the AhpC enzyme activity. This chain is Alkyl hydroperoxide reductase AhpD, found in Brucella anthropi (strain ATCC 49188 / DSM 6882 / CCUG 24695 / JCM 21032 / LMG 3331 / NBRC 15819 / NCTC 12168 / Alc 37) (Ochrobactrum anthropi).